A 630-amino-acid chain; its full sequence is DNA topoisomerase 4 subunit B (630 aa).

Residues Y5, N42, D69, G110–I116, and K334 contribute to the ATP site. Positions T412 to P525 constitute a Toprim domain. The Mg(2+) site is built by E418, D490, and D492.

The protein belongs to the type II topoisomerase family. ParE type 1 subfamily. Heterotetramer composed of ParC and ParE. The cofactor is Mg(2+). It depends on Mn(2+) as a cofactor. Ca(2+) is required as a cofactor.

It catalyses the reaction ATP-dependent breakage, passage and rejoining of double-stranded DNA.. Pyrrolopyrimidines inhibit both GyrB and its paralog in topoisomerase IV (parE). In terms of biological role, topoisomerase IV is essential for chromosome segregation; it is the principal protein responsible for decatenating newly replicated chromosomes. It relaxes supercoiled DNA. MukB stimulates the relaxation activity of topoisomerase IV and also has a modest effect on decatenation. This chain is DNA topoisomerase 4 subunit B, found in Escherichia coli (strain K12).